Consider the following 209-residue polypeptide: uncharacterized protein (209 aa).

The MPN domain occupies 1-67 (MEILPKYKPE…LIMYNYWTID (67 aa)). Zn(2+) contacts are provided by H17, H19, and D30. A JAMM motif motif is present at residues 17–30 (HTHPKGPAEPSIND).

This is an uncharacterized protein from Acidianus convivator (ATV).